We begin with the raw amino-acid sequence, 247 residues long: ATP synthase subunit a, chloroplastic (247 aa).

The next 5 membrane-spanning stretches (helical) occupy residues 38 to 58 (QVLI…IIAV), 95 to 115 (VPFI…GALL), 134 to 154 (INTT…AGLT), 199 to 219 (LVVV…VMFL), and 220 to 240 (GLFT…AYIG).

This sequence belongs to the ATPase A chain family. F-type ATPases have 2 components, CF(1) - the catalytic core - and CF(0) - the membrane proton channel. CF(1) has five subunits: alpha(3), beta(3), gamma(1), delta(1), epsilon(1). CF(0) has four main subunits: a, b, b' and c.

The protein resides in the plastid. Its subcellular location is the chloroplast thylakoid membrane. In terms of biological role, key component of the proton channel; it plays a direct role in the translocation of protons across the membrane. This Carica papaya (Papaya) protein is ATP synthase subunit a, chloroplastic.